The following is a 431-amino-acid chain: Enolase (431 aa).

Gln-163 serves as a coordination point for (2R)-2-phosphoglycerate. Glu-205 acts as the Proton donor in catalysis. Positions 242, 288, and 315 each coordinate Mg(2+). Residues Lys-340, Arg-369, Ser-370, and Lys-391 each contribute to the (2R)-2-phosphoglycerate site. Lys-340 functions as the Proton acceptor in the catalytic mechanism.

The protein belongs to the enolase family. It depends on Mg(2+) as a cofactor.

The protein resides in the cytoplasm. The protein localises to the secreted. It is found in the cell surface. It catalyses the reaction (2R)-2-phosphoglycerate = phosphoenolpyruvate + H2O. Its pathway is carbohydrate degradation; glycolysis; pyruvate from D-glyceraldehyde 3-phosphate: step 4/5. In terms of biological role, catalyzes the reversible conversion of 2-phosphoglycerate (2-PG) into phosphoenolpyruvate (PEP). It is essential for the degradation of carbohydrates via glycolysis. In Bacillus anthracis (strain A0248), this protein is Enolase.